A 485-amino-acid polypeptide reads, in one-letter code: GlcNAc-binding protein A (485 aa).

An N-terminal signal peptide occupies residues 1 to 29 (MKKQPQKTLLAIALSVVSGTAMSHGYVSA). The 171-residue stretch at 30 to 200 (VENGVAEARV…SFYNVIDVKF (171 aa)) folds into the Chitin-binding type-4 domain. Residues 437–478 (AGTKVLASDGAIYQCKPFPYSGYCVQWTPTATQYQPGTGSHW) enclose the Chitin-binding type-3 domain.

The protein belongs to the GbpA family.

It is found in the secreted. In terms of biological role, probably interacts with GlcNAc residues. May promote attachment to both epithelial cell surfaces and chitin. This is GlcNAc-binding protein A from Vibrio vulnificus (strain YJ016).